A 2332-amino-acid chain; its full sequence is Phosphatidylinositol phosphatase PTPRQ (2332 aa).

The N-terminal stretch at 1-35 (MKKVPIKPEQPEKLRAFNISTHSFSLHWSLPSGHV) is a signal peptide. Fibronectin type-III domains are found at residues 36-99 (ERYQ…TKPG), 100-195 (PPVF…TAES), 199-294 (KVVN…SSST), 350-438 (PPQN…PPDV), 441-539 (AVFD…SHPD), 514-606 (GLYE…SVRT), 610-705 (VPSS…TSED), 710-799 (SPQD…TSET), 804-894 (APEN…TEED), 899-988 (PPQD…TPEG), 993-1093 (PPKD…TDQD), 1098-1190 (FVGN…TEED), 1192-1282 (PETS…TDES), 1287-1380 (PPQN…TQES), 1384-1470 (VVQN…LPET), 1474-1578 (VPTN…TLPG), 1583-1681 (PPEN…TLES), and 1686-1787 (PPNN…IKAP). The Extracellular segment spans residues 36–1947 (ERYQVDLVPD…GEGLSERTVE (1912 aa)). A glycan (N-linked (GlcNAc...) asparagine) is linked at Asn-94. N-linked (GlcNAc...) asparagine glycosylation is found at Asn-202 and Asn-394. N-linked (GlcNAc...) asparagine glycosylation is found at Asn-944, Asn-1038, Asn-1080, and Asn-1101. Asn-1290 and Asn-1295 each carry an N-linked (GlcNAc...) asparagine glycan. An N-linked (GlcNAc...) asparagine glycan is attached at Asn-1844. The chain crosses the membrane as a helical span at residues 1948-1968 (IILSVTLCILSIILLGTAIFA). The Cytoplasmic portion of the chain corresponds to 1969 to 2332 (FARIRQKQKE…VELEWEETTM (364 aa)). The region spanning 2036-2292 (FQEEFSELPK…IFLHQCILDL (257 aa)) is the Tyrosine-protein phosphatase domain. The active-site Phosphocysteine intermediate is Cys-2233.

This sequence belongs to the protein-tyrosine phosphatase family. Receptor class 2A subfamily. As to quaternary structure, interacts with TPRN. TPRN, CLIC5 and PTPQR form concentric rings at the base of stereocilia and may form a complex. In terms of tissue distribution, in developing kidney, it localizes to the basal membrane of podocytes, beginning when podocyte progenitors can first be identified in the embryonic kidney (at protein level). Expressed in lung and kidney.

Its subcellular location is the cell projection. It is found in the stereocilium. The protein resides in the apical cell membrane. The protein localises to the basal cell membrane. It catalyses the reaction a 1,2-diacyl-sn-glycero-3-phospho-(1D-myo-inositol-3,4,5-trisphosphate) + H2O = a 1,2-diacyl-sn-glycero-3-phospho-(1D-myo-inositol-4,5-bisphosphate) + phosphate. It carries out the reaction a 1,2-diacyl-sn-glycero-3-phospho-(1D-myo-inositol-3,4,5-trisphosphate) + H2O = a 1,2-diacyl-sn-glycero-3-phospho-(1D-myo-inositol-3,4-bisphosphate) + phosphate. The enzyme catalyses a 1,2-diacyl-sn-glycero-3-phospho-(1D-myo-inositol-3,5-bisphosphate) + H2O = a 1,2-diacyl-sn-glycero-3-phospho-(1D-myo-inositol-5-phosphate) + phosphate. The catalysed reaction is a 1,2-diacyl-sn-glycero-3-phospho-(1D-myo-inositol-3,5-bisphosphate) + H2O = a 1,2-diacyl-sn-glycero-3-phospho-(1D-myo-inositol-3-phosphate) + phosphate. Its function is as follows. Dephosphorylates phosphatidylinositol phosphates, such as phosphatidylinositol 3,4,5-trisphosphate (PIP3) and phosphatidylinositol 3,5-diphosphates, with preference for PIP3. Phosphate can be hydrolyzed from the D3 and D5 positions in the inositol ring. Has low tyrosine-protein phosphatase activity in vitro; however, the relevance of such activity in vivo is unclear. Plays an important role in adipogenesis of mesenchymal stem cells (MSCs). Regulates the phosphorylation state of AKT1 by regulating the levels of PIP3 in MSCs and preadipocyte cells. Required for hair bundle maturation, a process that enables hair cells to detect and transmit sound and balance signals effectively, therefore affecting auditory function. May act by regulating the level of phosphatidylinositol 4,5-bisphosphate (PIP2) level in the basal region of hair bundles. The chain is Phosphatidylinositol phosphatase PTPRQ (PTPRQ) from Homo sapiens (Human).